The following is a 450-amino-acid chain: Chromosomal replication initiator protein DnaA (450 aa).

The segment at M1–I79 is domain I, interacts with DnaA modulators. The domain II stretch occupies residues I79–S111. A domain III, AAA+ region region spans residues M112–S328. ATP is bound by residues G156, G158, K159, and T160. Residues S329–L450 form a domain IV, binds dsDNA region.

It belongs to the DnaA family. In terms of assembly, oligomerizes as a right-handed, spiral filament on DNA at oriC.

The protein localises to the cytoplasm. In terms of biological role, plays an essential role in the initiation and regulation of chromosomal replication. ATP-DnaA binds to the origin of replication (oriC) to initiate formation of the DNA replication initiation complex once per cell cycle. Binds the DnaA box (a 9 base pair repeat at the origin) and separates the double-stranded (ds)DNA. Forms a right-handed helical filament on oriC DNA; dsDNA binds to the exterior of the filament while single-stranded (ss)DNA is stabiized in the filament's interior. The ATP-DnaA-oriC complex binds and stabilizes one strand of the AT-rich DNA unwinding element (DUE), permitting loading of DNA polymerase. After initiation quickly degrades to an ADP-DnaA complex that is not apt for DNA replication. Binds acidic phospholipids. The sequence is that of Chromosomal replication initiator protein DnaA from Geobacillus sp. (strain WCH70).